The sequence spans 469 residues: Arginine biosynthesis bifunctional protein ArgJ, chloroplastic (469 aa).

Residues Thr213, Lys239, Thr250, Glu337, Asn464, and Thr469 each coordinate substrate. Thr250 functions as the Nucleophile in the catalytic mechanism.

It belongs to the ArgJ family. As to quaternary structure, heterodimer of an alpha and a beta chain.

The protein resides in the plastid. Its subcellular location is the chloroplast. The enzyme catalyses N(2)-acetyl-L-ornithine + L-glutamate = N-acetyl-L-glutamate + L-ornithine. It carries out the reaction L-glutamate + acetyl-CoA = N-acetyl-L-glutamate + CoA + H(+). The protein operates within amino-acid biosynthesis; L-arginine biosynthesis; L-ornithine and N-acetyl-L-glutamate from L-glutamate and N(2)-acetyl-L-ornithine (cyclic): step 1/1. Its pathway is amino-acid biosynthesis; L-arginine biosynthesis; N(2)-acetyl-L-ornithine from L-glutamate: step 1/4. Catalyzes two activities which are involved in the cyclic version of arginine biosynthesis: the synthesis of acetylglutamate from glutamate and acetyl-CoA, and of ornithine by transacetylation between acetylornithine and glutamate. This chain is Arginine biosynthesis bifunctional protein ArgJ, chloroplastic, found in Ricinus communis (Castor bean).